The chain runs to 399 residues: Tryptophan synthase beta chain (399 aa).

An N6-(pyridoxal phosphate)lysine modification is found at Lys-92.

This sequence belongs to the TrpB family. Tetramer of two alpha and two beta chains. Requires pyridoxal 5'-phosphate as cofactor.

It catalyses the reaction (1S,2R)-1-C-(indol-3-yl)glycerol 3-phosphate + L-serine = D-glyceraldehyde 3-phosphate + L-tryptophan + H2O. It functions in the pathway amino-acid biosynthesis; L-tryptophan biosynthesis; L-tryptophan from chorismate: step 5/5. Functionally, the beta subunit is responsible for the synthesis of L-tryptophan from indole and L-serine. The protein is Tryptophan synthase beta chain of Legionella pneumophila subsp. pneumophila (strain Philadelphia 1 / ATCC 33152 / DSM 7513).